We begin with the raw amino-acid sequence, 476 residues long: Aspartyl/glutamyl-tRNA(Asn/Gln) amidotransferase subunit B (476 aa).

Belongs to the GatB/GatE family. GatB subfamily. In terms of assembly, heterotrimer of A, B and C subunits.

The enzyme catalyses L-glutamyl-tRNA(Gln) + L-glutamine + ATP + H2O = L-glutaminyl-tRNA(Gln) + L-glutamate + ADP + phosphate + H(+). It carries out the reaction L-aspartyl-tRNA(Asn) + L-glutamine + ATP + H2O = L-asparaginyl-tRNA(Asn) + L-glutamate + ADP + phosphate + 2 H(+). Allows the formation of correctly charged Asn-tRNA(Asn) or Gln-tRNA(Gln) through the transamidation of misacylated Asp-tRNA(Asn) or Glu-tRNA(Gln) in organisms which lack either or both of asparaginyl-tRNA or glutaminyl-tRNA synthetases. The reaction takes place in the presence of glutamine and ATP through an activated phospho-Asp-tRNA(Asn) or phospho-Glu-tRNA(Gln). The protein is Aspartyl/glutamyl-tRNA(Asn/Gln) amidotransferase subunit B of Neisseria meningitidis serogroup C (strain 053442).